The following is a 1059-amino-acid chain: Zinc finger protein 865 (1059 aa).

Disordered regions lie at residues 1–24 (MEANPAGSGAGGGGSSGIGGEDGV), 58–142 (LPCA…DAAF), and 161–206 (NLKR…CDPT). Positions 8-21 (SGAGGGGSSGIGGE) are enriched in gly residues. Pro residues predominate over residues 61-78 (APGPPPQPPPQPPPPQYD). The segment covering 93 to 119 (SSSSSSSSSSSSSSSSSSSSSSSSSQA) has biased composition (low complexity). 2 stretches are compositionally biased toward pro residues: residues 124–137 (PPLPPAFGAPPPPL) and 183–198 (APGPLPAPSQTPPGPP). C2H2-type zinc fingers lie at residues 224–246 (FPCGVCQKSFKQSSHLVQHMLVH) and 252–274 (YECGVCGRTYNHVSSLIRHRRCH). Positions 275-342 (KDVPPAAGGP…PAGVGVPPPA (68 aa)) are disordered. The span at 281 to 296 (AGGPPQPGPHLPPLGL) shows a compositional bias: pro residues. Low complexity-rich tracts occupy residues 297 to 316 (PAPAASAATAAAPSTVSSGP) and 324 to 337 (APSADGSAAPAGVG). C2H2-type zinc fingers lie at residues 350 to 372 (FACPLCWKVFKKPSHLHQHQIIH), 378 to 400 (FSCSVCSKSFNRRESLKRHVKTH), 407 to 429 (LPCGICGKAFRDASYLLKHQAAH), and 441 to 463 (YPCDLCGKSYSAPQSLLRHKAAH). A disordered region spans residues 461 to 503 (AAHAPPAAAAEAPKDGAASAPQPPPTFPPGPYLLPPDPPTTDS). Low complexity predominate over residues 463–480 (HAPPAAAAEAPKDGAASA). The span at 481–499 (PQPPPTFPPGPYLLPPDPP) shows a compositional bias: pro residues. 5 C2H2-type zinc fingers span residues 550-572 (FCCGICGRGFGRRETLKRHERIH), 578-600 (HQCPVCGKRFRESFHLSKHHVVH), 606-628 (YKCELCGKVFGYPQSLTRHRQVH), 669-691 (YACSDCGEHFPDLFHVMSHKEVH), and 697-719 (YGCDACGKTFGFIENLMWHKLVH). Residues 726 to 747 (LLPPAPGGLQPPDGSSGTDAAS) form a disordered region. C2H2-type zinc fingers lie at residues 792–814 (FSCATCGQSFKHFLGLVTHKYVH), 820–842 (LGCGLCGQSFAGAYDLLLHRRSH), 848–870 (FRCPVCGKRFWEAALLMRHQRCH), 876–898 (YRCGVCGRGFLRSWYLRQHRVVH), 904–926 (FKCGVCAKRFAQSSSLAEHRRLH), 932–954 (QRCSACGKTFRYRSNLLEHQRLH), 960–982 (YRCEHCGKGFFYLSSVLRHQRAH), 989–1011 (LRCPACLKAFKDPGYFRKHLAAH), and 1017–1039 (FRCSSCGEGFANTYGLKKHRLAH). A Glycyl lysine isopeptide (Lys-Gly) (interchain with G-Cter in SUMO2) cross-link involves residue lysine 802. Residue lysine 1040 forms a Glycyl lysine isopeptide (Lys-Gly) (interchain with G-Cter in SUMO2) linkage.

It belongs to the krueppel C2H2-type zinc-finger protein family.

The protein resides in the nucleus. May be involved in transcriptional regulation. The chain is Zinc finger protein 865 (ZNF865) from Homo sapiens (Human).